The primary structure comprises 609 residues: Glutamine--fructose-6-phosphate aminotransferase [isomerizing] (609 aa).

Catalysis depends on Cys2, which acts as the Nucleophile; for GATase activity. The Glutamine amidotransferase type-2 domain maps to 2 to 217; that stretch reads CGIVGAIAGR…DGDTAEIRRD (216 aa). SIS domains lie at 285-425 and 458-599; these read AESV…LRGA and WAEC…VDKP. The active-site For Fru-6P isomerization activity is the Lys604.

As to quaternary structure, homodimer.

It is found in the cytoplasm. It carries out the reaction D-fructose 6-phosphate + L-glutamine = D-glucosamine 6-phosphate + L-glutamate. Functionally, catalyzes the first step in hexosamine metabolism, converting fructose-6P into glucosamine-6P using glutamine as a nitrogen source. The polypeptide is Glutamine--fructose-6-phosphate aminotransferase [isomerizing] (Xylella fastidiosa (strain 9a5c)).